A 54-amino-acid chain; its full sequence is SEITRVPLHKGKSLRKALKEHGLLEBFDKVSNEPLADFLDSEYFGKIYIGTPPZ.

A propeptide spans 1 to 27 (SEITRVPLHKGKSLRKALKEHGLLEBF) (activation peptide).

This sequence belongs to the peptidase A1 family. Monomer.

It catalyses the reaction Broad specificity similar to that of pepsin A. Clots milk by cleavage of a single 104-Ser-Phe-|-Met-Ala-107 bond in kappa-chain of casein.. In terms of biological role, chymosin is synthesized in the mucosa of the stomach. The enzyme hydrolyzes casein to paracasein. The chain is Chymosin (CYM) from Felis catus (Cat).